The sequence spans 119 residues: Phytosulfokines 2 (119 aa).

Positions 1–34 are cleaved as a signal peptide; that stretch reads MSTTRGVSSSSAAAALALLLLFALCFFSFHSAAA. A propeptide spanning residues 35-109 is cleaved from the precursor; that stretch reads ARAVPRDEHQ…RRLLSDAHLD (75 aa). Tyrosine 110 and tyrosine 112 each carry sulfotyrosine. Positions 115 to 119 are excised as a propeptide; it reads HKNKP.

It belongs to the phytosulfokine family. Post-translationally, sulfation is important for activity and for the binding to a putative membrane receptor. PSK-alpha is produced by endopeptidase digestion. PSK-beta is produced from PSK-alpha by exopeptidase digestion.

It is found in the secreted. Functionally, promotes plant cell differentiation, organogenesis and somatic embryogenesis as well as cell proliferation. The chain is Phytosulfokines 2 (PSK2) from Oryza sativa subsp. indica (Rice).